A 704-amino-acid polypeptide reads, in one-letter code: DNA ligase (704 aa).

NAD(+)-binding positions include 43-47 (DADYD), 92-93 (SL), and E124. Residue K126 is the N6-AMP-lysine intermediate of the active site. Residues R147, E182, K298, and K322 each contribute to the NAD(+) site. Residues C427, C430, C445, and C451 each contribute to the Zn(2+) site. Residues 625-704 (PVASPVAGKI…DGWLRLIGDA (80 aa)) enclose the BRCT domain.

It belongs to the NAD-dependent DNA ligase family. LigA subfamily. The cofactor is Mg(2+). It depends on Mn(2+) as a cofactor.

The enzyme catalyses NAD(+) + (deoxyribonucleotide)n-3'-hydroxyl + 5'-phospho-(deoxyribonucleotide)m = (deoxyribonucleotide)n+m + AMP + beta-nicotinamide D-nucleotide.. DNA ligase that catalyzes the formation of phosphodiester linkages between 5'-phosphoryl and 3'-hydroxyl groups in double-stranded DNA using NAD as a coenzyme and as the energy source for the reaction. It is essential for DNA replication and repair of damaged DNA. The polypeptide is DNA ligase (Cereibacter sphaeroides (strain ATCC 17023 / DSM 158 / JCM 6121 / CCUG 31486 / LMG 2827 / NBRC 12203 / NCIMB 8253 / ATH 2.4.1.) (Rhodobacter sphaeroides)).